The following is a 179-amino-acid chain: Large ribosomal subunit protein uL5 (179 aa).

The protein belongs to the universal ribosomal protein uL5 family. In terms of assembly, part of the 50S ribosomal subunit; part of the 5S rRNA/L5/L18/L25 subcomplex. Contacts the 5S rRNA and the P site tRNA. Forms a bridge to the 30S subunit in the 70S ribosome.

In terms of biological role, this is one of the proteins that bind and probably mediate the attachment of the 5S RNA into the large ribosomal subunit, where it forms part of the central protuberance. In the 70S ribosome it contacts protein S13 of the 30S subunit (bridge B1b), connecting the 2 subunits; this bridge is implicated in subunit movement. Contacts the P site tRNA; the 5S rRNA and some of its associated proteins might help stabilize positioning of ribosome-bound tRNAs. This Rickettsia prowazekii (strain Madrid E) protein is Large ribosomal subunit protein uL5.